The primary structure comprises 610 residues: Nuclear factor 7, ovary (610 aa).

Residues 21–75 form the Tudor-knot domain; the sequence is NVGSTYPCKRSDGSQHDADIVKTRYNKQAGREEYYVHYVGLNRRQNEWVDKSRLV. Residues 79 to 127 form a disordered region; the sequence is PPKEVETNGTDQEEMTEPTEQPDSKTPQKRKLEEPEPEPKKAKVEDKDA. Residue Thr104 is modified to Phosphothreonine; by CDK1. The span at 108 to 127 shows a compositional bias: basic and acidic residues; sequence RKLEEPEPEPKKAKVEDKDA. The RING-type zinc finger occupies 146-186; it reads CPLCVELFKDPVMVACGHNFCRSCIDKVWEGQSSFACPECK. A B box-type zinc finger spans residues 220-261; the sequence is RPLEKCSEHDERLKLYCKDDGTLGCVICRDSLKHASHNFLPI. Residues Cys225, His228, Cys247, and His253 each coordinate Zn(2+). The stretch at 295–374 forms a coiled coil; the sequence is DKIEQHNKNV…AKERMEETDS (80 aa). The B30.2/SPRY domain occupies 415-610; that stretch reads PIQYIMWKEL…VDALRFVHNQ (196 aa).

In terms of assembly, monomer. Abundant in oocytes. At the neurula stage, low expression in dorsal embryo region including neural folds and somites.

It localises to the nucleus. Its function is as follows. Transcription factor that determines dorsal-ventral body axis. The sequence is that of Nuclear factor 7, ovary from Xenopus laevis (African clawed frog).